The primary structure comprises 302 residues: Phosphoribosylaminoimidazole-succinocarboxamide synthase (302 aa).

This sequence belongs to the SAICAR synthetase family.

The enzyme catalyses 5-amino-1-(5-phospho-D-ribosyl)imidazole-4-carboxylate + L-aspartate + ATP = (2S)-2-[5-amino-1-(5-phospho-beta-D-ribosyl)imidazole-4-carboxamido]succinate + ADP + phosphate + 2 H(+). It functions in the pathway purine metabolism; IMP biosynthesis via de novo pathway; 5-amino-1-(5-phospho-D-ribosyl)imidazole-4-carboxamide from 5-amino-1-(5-phospho-D-ribosyl)imidazole-4-carboxylate: step 1/2. The chain is Phosphoribosylaminoimidazole-succinocarboxamide synthase from Cupriavidus necator (strain ATCC 17699 / DSM 428 / KCTC 22496 / NCIMB 10442 / H16 / Stanier 337) (Ralstonia eutropha).